The sequence spans 131 residues: Small ribosomal subunit protein uS8 (131 aa).

Belongs to the universal ribosomal protein uS8 family. In terms of assembly, part of the 30S ribosomal subunit. Contacts proteins S5 and S12.

In terms of biological role, one of the primary rRNA binding proteins, it binds directly to 16S rRNA central domain where it helps coordinate assembly of the platform of the 30S subunit. The polypeptide is Small ribosomal subunit protein uS8 (Legionella pneumophila (strain Paris)).